The sequence spans 570 residues: Pleckstrin homology domain-containing family D member 1 (570 aa).

Residues 1-13 (MTTKTTPKELKAK) are compositionally biased toward basic and acidic residues. The tract at residues 1–42 (MTTKTTPKELKAKKESKKKGSAPEPPKNGPPRTSPPNTIEKK) is disordered. Positions 23-34 (PEPPKNGPPRTS) are enriched in pro residues. Residues 83 to 192 (GVQNYGILMK…WLKALRSATK (110 aa)) form the PH domain. A coiled-coil region spans residues 202–448 (ETMIRELENR…TGAQMTELQE (247 aa)). Residues 542 to 551 (SKRGIRSSFR) are compositionally biased toward basic residues. Positions 542-570 (SKRGIRSSFRKKTDSITTQPREKEPLMQL) are disordered. The span at 561–570 (PREKEPLMQL) shows a compositional bias: basic and acidic residues.

Belongs to the PLEKHD1 family.

The chain is Pleckstrin homology domain-containing family D member 1 from Caenorhabditis elegans.